A 473-amino-acid polypeptide reads, in one-letter code: UDP-N-acetylmuramate--L-alanine ligase (473 aa).

Position 122–128 (122–128 (GTHGKTT)) interacts with ATP.

Belongs to the MurCDEF family.

The protein localises to the cytoplasm. The enzyme catalyses UDP-N-acetyl-alpha-D-muramate + L-alanine + ATP = UDP-N-acetyl-alpha-D-muramoyl-L-alanine + ADP + phosphate + H(+). The protein operates within cell wall biogenesis; peptidoglycan biosynthesis. Functionally, cell wall formation. The chain is UDP-N-acetylmuramate--L-alanine ligase from Teredinibacter turnerae (strain ATCC 39867 / T7901).